Here is a 239-residue protein sequence, read N- to C-terminus: 1-(5-phosphoribosyl)-5-[(5-phosphoribosylamino)methylideneamino] imidazole-4-carboxamide isomerase (239 aa).

The Proton acceptor role is filled by D8. D129 serves as the catalytic Proton donor.

Belongs to the HisA/HisF family.

The protein localises to the cytoplasm. It catalyses the reaction 1-(5-phospho-beta-D-ribosyl)-5-[(5-phospho-beta-D-ribosylamino)methylideneamino]imidazole-4-carboxamide = 5-[(5-phospho-1-deoxy-D-ribulos-1-ylimino)methylamino]-1-(5-phospho-beta-D-ribosyl)imidazole-4-carboxamide. It functions in the pathway amino-acid biosynthesis; L-histidine biosynthesis; L-histidine from 5-phospho-alpha-D-ribose 1-diphosphate: step 4/9. This Bacillus thuringiensis subsp. konkukian (strain 97-27) protein is 1-(5-phosphoribosyl)-5-[(5-phosphoribosylamino)methylideneamino] imidazole-4-carboxamide isomerase.